The sequence spans 225 residues: Probable methylthioribulose-1-phosphate dehydratase (225 aa).

Residue Cys-86 participates in substrate binding. The Zn(2+) site is built by His-104 and His-106. Glu-127 (proton donor/acceptor) is an active-site residue. His-183 serves as a coordination point for Zn(2+).

Belongs to the aldolase class II family. MtnB subfamily. The cofactor is Zn(2+).

The protein resides in the cytoplasm. The catalysed reaction is 5-(methylsulfanyl)-D-ribulose 1-phosphate = 5-methylsulfanyl-2,3-dioxopentyl phosphate + H2O. Its pathway is amino-acid biosynthesis; L-methionine biosynthesis via salvage pathway; L-methionine from S-methyl-5-thio-alpha-D-ribose 1-phosphate: step 2/6. Its function is as follows. Catalyzes the dehydration of methylthioribulose-1-phosphate (MTRu-1-P) into 2,3-diketo-5-methylthiopentyl-1-phosphate (DK-MTP-1-P). In Leishmania braziliensis, this protein is Probable methylthioribulose-1-phosphate dehydratase.